Reading from the N-terminus, the 273-residue chain is Giardin subunit beta (273 aa).

Positions 1 to 19 (MSMFTSTRTLTQTMDKPDD) are nonhelical region. A rod region spans residues 20 to 273 (LTRSATETAV…GGLSMVTKHQ (254 aa)). 2 coiled-coil regions span residues 123–175 (DTLN…YDQL) and 211–263 (NTKL…SKIQ).

Belongs to the SF-assemblin family. As to quaternary structure, interacts with BOP1 (via C-terminal WD repeats).

Its subcellular location is the cytoplasm. The protein localises to the cytoskeleton. In terms of biological role, giardins are involved in parasite attachment to the intestinal mucosa and in the cytoskeletal disassembly and reassembly that marks the transition from infectious trophozoite to transmissible cyst. They may interact with other cytoskeletal proteins such as microtubules in the microribbons or crossbridges, to maintain the integrity of the ventral disk. The chain is Giardin subunit beta from Giardia intestinalis (Giardia lamblia).